The following is a 501-amino-acid chain: Phosphatidylinositol 4-kinase type 2-beta (501 aa).

Disordered stretches follow at residues 1 to 30 (MMAE…SSEV) and 65 to 122 (TELE…NHFP). Residues 17–27 (GDSTPETNFLS) are compositionally biased toward polar residues. The span at 76–88 (ALLLPGPAGSLSP) shows a compositional bias: low complexity. A compositionally biased stretch (polar residues) spans 99-117 (NMLSSSSDNLASPGNSSGE). The 331-residue stretch at 141 to 471 (GVFPERISQG…VQMPRVVVER (331 aa)) folds into the PI3K/PI4K catalytic domain. The G-loop stretch occupies residues 147–153 (ISQGSSG). 2 residues coordinate ATP: Ser154 and Lys169. The important for substrate binding stretch occupies residues 174–176 (EPY). Positions 182 to 195 (KWTKYFHKVCCPCC) are important for interaction with membranes. ATP-binding positions include 278-281 (QLFV) and 292-293 (RK). Positions 285-293 (HEADFWLRK) are important for interaction with membranes. The catalytic loop stretch occupies residues 322–330 (RNTDRGNDN). The tract at residues 362–382 (AIDNGLAFPFKHPDEWRAYPF) is activation loop. Asp364 provides a ligand contact to ATP. Residues 377 to 386 (WRAYPFHWAW) are important for interaction with membranes.

The protein belongs to the PI3/PI4-kinase family. Type II PI4K subfamily.

The protein resides in the cytoplasm. It is found in the cytosol. Its subcellular location is the golgi apparatus membrane. The protein localises to the endoplasmic reticulum membrane. It localises to the cell membrane. The protein resides in the early endosome membrane. The enzyme catalyses a 1,2-diacyl-sn-glycero-3-phospho-(1D-myo-inositol) + ATP = a 1,2-diacyl-sn-glycero-3-phospho-(1D-myo-inositol 4-phosphate) + ADP + H(+). Its function is as follows. Contributes to the overall PI4-kinase activity of the cell. This contribution may be especially significant in plasma membrane, endosomal and Golgi compartments. The phosphorylation of phosphatidylinositol (PI) to PI4P is the first committed step in the generation of phosphatidylinositol 4,5-bisphosphate (PIP2), a precursor of the second messenger inositol 1,4,5-trisphosphate (InsP3). This is Phosphatidylinositol 4-kinase type 2-beta (pi4k2b) from Danio rerio (Zebrafish).